The primary structure comprises 393 residues: Protein TsgA (393 aa).

Residues M1–T10 are Cytoplasmic-facing. Residues W11–M31 form a helical membrane-spanning segment. The Periplasmic segment spans residues G32–T50. Residues F51–P71 traverse the membrane as a helical segment. Residues L72–R77 lie on the Cytoplasmic side of the membrane. The chain crosses the membrane as a helical span at residues F78–L98. Over F99–S100 the chain is Periplasmic. Residues A101–I121 traverse the membrane as a helical segment. Residues T122–R133 are Cytoplasmic-facing. Residues L134–F154 traverse the membrane as a helical segment. Topologically, residues L155 to E161 are periplasmic. The helical transmembrane segment at W162–G182 threads the bilayer. At C183–G205 the chain is on the cytoplasmic side. A helical transmembrane segment spans residues I206–I226. Over S227 to G244 the chain is Periplasmic. Residues A245 to L265 traverse the membrane as a helical segment. The Cytoplasmic segment spans residues R266–R272. A helical transmembrane segment spans residues I273 to Q293. The Periplasmic segment spans residues A294–P297. Residues W298 to G318 form a helical membrane-spanning segment. At S319–N331 the chain is on the cytoplasmic side. The helical transmembrane segment at F332–V352 threads the bilayer. At A353 to A360 the chain is on the periplasmic side. The helical transmembrane segment at L361–V381 threads the bilayer. Topologically, residues S382–H393 are cytoplasmic.

The protein belongs to the major facilitator superfamily. TsgA family.

The protein resides in the cell inner membrane. In Salmonella paratyphi A (strain ATCC 9150 / SARB42), this protein is Protein TsgA.